A 1733-amino-acid polypeptide reads, in one-letter code: MEVLKKLKLLLWKNFILKRRKTLITLLEMLMPLLFCAIVLYLRLNSMPRKKSSTNYPAVDVSLLPVYFYNYPLKSKFQLAYIPSKSETLKAVTEVVEQTFAVDFEVLGFPSVPLFEDYIIKDPKSFYILVGIIFHHDFNSSNEPLPLVVKYDLRFSYVQRNFVSPPRHLFFQEEIEGWCTAFLYPPNLSQAPREFSYADGGNPGYNKEGFLAIQHAVDKAIMRHHAPKAALNMFKDLHVLVQRFPFGPHIQDPFLVILQNEFPLLLMLSFICVELIITNSVLSEKERKQKEYMSMMGVESWLHWVAWFITFFISVSITVSVMTVLFCTKINRVAVFRNSNPTLIFIFLMCFAIATIFFAFMMSTFFQRAHVGTVIGGTVFFFTYLPYMYITFSYHQRTYTQKILSCLFSNVAMATGVRFISLFEAEGTGIQWRNIGSVWGDFSFAQVLGMLLLDSFLYCLIAFLVESLFPRKFGIPKSWYIFAKKPVPEIPPLLNIGDPEKPSKGNFMQDEPTNQMNTIEIQHLYKVFYSGRSKRTAIRDLSMNLYKGQVTVLLGHNGAGKTTVCSVLTGLITPSKGHAYIHGCEISKDMVQIRKSLGWCPQHDILFDNFTVTDHLYFYGQLKGLSPQDCHEQTQEMLHLLGLKDKWNSRSKFLSGGMKRKLSIGIALIAGSKVLILDEPTSGLDSPSRRAIWDLLQQQKGDRTVLLTTHFMDEADLLGDRIAILAKGELQCCGSPSFLKQKYGAGYYMTIIKTPLCDTSKLSEVIYHHIPNAVLESNIGEEMIVTLPKKTIHRFEALFNDLELRQTELGISTFATSVTTMEEVFIRVCKLADPSTNVLTEKRHSLHPLPRHHRVPVDRIKCLHSGTFPVSTEQPMRLNTGFCLLCQQFYAMLLKKITYSRRNWMLVLSVQVLLPLAIIMLSLTFFNFKLRKLDNVPLELTLQTYGQTIVPFFIAENSHLDPQLSDDFVKMLVAAGQVPLRIQGSVEDFLLKKAKEAPEGFDKLYVVAASFEDVNNHTTVKALFNNQAYHSPSLALTLVDNLLFKLLSGANASITTTNYPQPQTAIEVSESILYQGPKGHYLVVNFLFGIAFLSSSFSILTVGEKSVKSKSLQFVSGVSTAVFWLSALLWDLISFLVPTLLLVLVFLWYKEEAFAHHESIPAVVLIMMLYGWAVIPLVYTVSFSFNTPGSACVKLVVMLTFLSISPVVLVTVTSEKDLGYTELSDSLDHIFLILPGHCLGMALSNLYYNFELKKFCSAKNLSDIDCNDVLEGYVVQENIYAWESLGIGKYLTALAVLGPVYITMLFLTEANAFYVLKSRLSGFFPSFWKEKSGMIFDVAEPEDEDVLEEAETIKRYLETLVKKNPLVVKEVSKVYKDKVPLLAVNKVSFVVKEEECFGLLGLNGAGKTSIFNMLTSEQPITSGDAFVKGFNIKSDIAKVRQWIGYCPEFDALLNFMTGREMLVMYARIRGIPECHIKACVDLILENLLMCVCADKLVKTYSGGNKRMLSTGIALVGEPAVILLDEPSTGMDPVARRLLWDTVERVRESGKTIVITSHSMEECEALCTRLAIMVQGQFKCLGSPQHLKSKFGISYSLQAKVRRKWQQQMLEEFKAFVDLTFPGSNLEDEHQNMLQYYLPGPNLSWAKVFSIMEQAKKDYMLEDYSISQLSLEDIFLNFTRPESSTKEQIQQEQAVLASPSPPSNSRPISSPPSRLSSPTPKPLPSPPPSEPILL.

Helical transmembrane passes span 22–42, 262–282, 306–326, 342–362, 372–392, 403–423, and 444–464; these read TLITLLEMLMPLLFCAIVLYL, FPLLLMLSFICVELIITNSVL, AWFITFFISVSITVSVMTVLF, TLIFIFLMCFAIATIFFAFMM, GTVIGGTVFFFTYLPYMYITF, ILSCLFSNVAMATGVRFISLF, and FAQVLGMLLLDSFLYCLIAFL. Positions 519-752 constitute an ABC transporter 1 domain; the sequence is IEIQHLYKVF…YGAGYYMTII (234 aa). ATP is bound at residue 555-562; that stretch reads GHNGAGKT. N-linked (GlcNAc...) asparagine glycosylation occurs at Asn-609. 7 consecutive transmembrane segments (helical) span residues 906–926, 1082–1102, 1128–1148, 1160–1180, 1192–1212, 1230–1250, and 1287–1307; these read LVLSVQVLLPLAIIMLSLTFF, LVVNFLFGIAFLSSSFSILTV, LLWDLISFLVPTLLLVLVFLW, IPAVVLIMMLYGWAVIPLVYT, CVKLVVMLTFLSISPVVLVTV, IFLILPGHCLGMALSNLYYNF, and IGKYLTALAVLGPVYITMLFL. The region spanning 1366–1599 is the ABC transporter 2 domain; it reads LVVKEVSKVY…FGISYSLQAK (234 aa). ATP is bound at residue 1401–1408; it reads GLNGAGKT. Polar residues predominate over residues 1681–1692; that stretch reads ESSTKEQIQQEQ. The segment at 1681–1733 is disordered; that stretch reads ESSTKEQIQQEQAVLASPSPPSNSRPISSPPSRLSSPTPKPLPSPPPSEPILL. Over residues 1704-1717 the composition is skewed to low complexity; the sequence is SRPISSPPSRLSSP. Pro residues predominate over residues 1718–1733; the sequence is TPKPLPSPPPSEPILL.

It belongs to the ABC transporter superfamily. ABCA family. Post-translationally, N-glycosylated. As to expression, in the testis, detected predominantly in elongated spermatids at the late stage of germ cell development and in sperm, with no expression detected in immature germ cells such as spermatogonia and spermatocytes or in somatic cells such as Sertoli cells (at protein level). Expressed in the head and tail midpiece of elongated spermatids and sperm (at protein level). Expressed exclusively in the testis.

Its subcellular location is the endoplasmic reticulum membrane. The protein resides in the cytoplasm. The catalysed reaction is cholesterol(in) + ATP + H2O = cholesterol(out) + ADP + phosphate + H(+). Its function is as follows. Promotes cholesterol efflux from sperm which renders sperm capable of fertilization. Has also been shown to decrease levels of intracellular esterified neutral lipids including cholesteryl esters, fatty acid esters and triacylglycerols. In Mus musculus (Mouse), this protein is ATP-binding cassette sub-family A member 17.